Reading from the N-terminus, the 210-residue chain is Putative 3-methyladenine DNA glycosylase (210 aa).

This sequence belongs to the DNA glycosylase MPG family.

The sequence is that of Putative 3-methyladenine DNA glycosylase from Lactobacillus acidophilus (strain ATCC 700396 / NCK56 / N2 / NCFM).